A 165-amino-acid chain; its full sequence is Endoribonuclease YbeY (165 aa).

3 residues coordinate Zn(2+): H131, H135, and H141.

Belongs to the endoribonuclease YbeY family. Requires Zn(2+) as cofactor.

The protein resides in the cytoplasm. Its function is as follows. Single strand-specific metallo-endoribonuclease involved in late-stage 70S ribosome quality control and in maturation of the 3' terminus of the 16S rRNA. This chain is Endoribonuclease YbeY, found in Lachnoclostridium phytofermentans (strain ATCC 700394 / DSM 18823 / ISDg) (Clostridium phytofermentans).